The following is a 66-amino-acid chain: Large ribosomal subunit protein bL33c (66 aa).

It belongs to the bacterial ribosomal protein bL33 family.

Its subcellular location is the plastid. The protein resides in the chloroplast. The protein is Large ribosomal subunit protein bL33c of Ipomoea purpurea (Common morning glory).